The primary structure comprises 436 residues: Cytochrome P450 monooxygenase phqO (436 aa).

C377 serves as a coordination point for heme.

The protein belongs to the cytochrome P450 family. Requires heme as cofactor.

The protein operates within alkaloid biosynthesis. Functionally, cytochrome P450 monooxygenase; part of the gene cluster that mediates the biosynthesis of paraherquamide, a fungal indole alkaloid that belongs to a family of natural products containing a characteristic bicyclo[2.2.2]diazaoctane core. The first steps in the biosynthesis of paraherquamide is the production of the beta-methyl-proline precursor from L-isoleucine. They require oxidation of a terminally hydroxylated L-isoleucine to the corresponding aldehyde by enzymes which have still to be identified. Spontaneous cyclization and dehydration would yield the 4-methyl pyrolline-5-carboxylic acid, which is then reduced by the pyrroline-5-carboxylate reductase phqD leading to the beta-methyl-proline precursor. The next step of paraherquamide biosynthesis involves coupling of beta-methyl-proline and L-tryptophan by the bimodular NRPS phqB, to produce a monooxopiperazine intermediate. The reductase (R) domain of phqB utilizes NADPH for hydride transfer to reduce the thioester bond of the T domain-tethered linear dipeptide to a hemithioaminal intermediate, which spontaneously cleaves the C-S bond to release the aldehyde product. This compound undergoes spontaneous cyclization and dehydration to give a dienamine which is reverse prenylated at C-2 by the reverse prenyltransferase phqJ. The other prenyltransferase present in the cluster, phqI may be a redundant gene in the pathway. During biosynthetic assembly, the key step to produce the polycyclic core is catalyzed by the bifunctional reductase and intramolecular [4+2] Diels-Alderase, phqE, resulting in formation of the [2.2.2] diazaoctane intermediate preparaherquamide. Following formation of preparaherquamide, an indole 2,3-epoxidation-initiated pinacol-like rearrangement is catalyzed by the phqK FAD-dependent monooxygenase. The prenyltransferase phqA, the cytochrome P450 monooxygenase phqL, and the FAD-linked oxidoreductase phqH (or the cytochrome P450 monooxygenase phqM), are proposed to be involved in the formation of the pyran ring. The FAD-dependent monooxygenase phqK is likely responsible for generation of the spiro-oxindole, and the N-methylation is likely mediated by the phqN methyltransferase leading to the isolable natural product paraherquamide F. However, the order of these biosynthetic steps has still to be determined. In late-stage paraherquamide biosynthesis, the third P450 monooxygenase, phqO, is probably responsible for the C-14 hydroxylation, transforming paraherquamide F to paraherquamide G, and paraherquamide E to the final product paraherquamide A. The expansion from the 6-membered ring pyran (in paraherquamides F and G) to the 7-membered dioxepin ring (in paraherquamides A and E) represents a poorly understood but intriguing process that probably involves the 2-oxoglutarate-dependent dioxygenase phqC. Finally, the remaining members of the paraherquamide cluster, including phqI as well as phqM (or phqH), do not have a clearly prescribed role and appear to be redundant. The polypeptide is Cytochrome P450 monooxygenase phqO (Penicillium fellutanum).